A 245-amino-acid chain; its full sequence is MLQNIRIVLVETSHTGNMGSVARAMKTMGLTNLWLVNPLVKPDSQAIALAAGASDVIGNASIVDTLDEALAGCSLVVGTSARSRTLPWPMLDPRECGLKSVSEATHAPVAIVFGRERVGLTNDELQKCHYHVAIAANPEYSSLNLAMAVQVIAYEVRMAWLASQDAQTPAPGEEETPYPLVDDLERFYGHLEQVLLSTGFIRPNHPGQVMNKLRRLFTRARPESQELNILRGMLASIESSRNEKP.

Residues threonine 79–alanine 81, glycine 114, isoleucine 134, and serine 141–leucine 143 contribute to the S-adenosyl-L-methionine site.

This sequence belongs to the class IV-like SAM-binding methyltransferase superfamily. RNA methyltransferase TrmH family. As to quaternary structure, homodimer.

The protein localises to the cytoplasm. The enzyme catalyses cytidine(32) in tRNA + S-adenosyl-L-methionine = 2'-O-methylcytidine(32) in tRNA + S-adenosyl-L-homocysteine + H(+). It carries out the reaction uridine(32) in tRNA + S-adenosyl-L-methionine = 2'-O-methyluridine(32) in tRNA + S-adenosyl-L-homocysteine + H(+). In terms of biological role, catalyzes the formation of 2'O-methylated cytidine (Cm32) or 2'O-methylated uridine (Um32) at position 32 in tRNA. The sequence is that of tRNA (cytidine/uridine-2'-O-)-methyltransferase TrmJ (trmJ) from Cronobacter sakazakii (strain ATCC BAA-894) (Enterobacter sakazakii).